The following is a 284-amino-acid chain: NAD kinase (284 aa).

Asp70 acts as the Proton acceptor in catalysis. NAD(+)-binding positions include 70 to 71, 139 to 140, Lys167, Asp169, Leu177, 180 to 185, and Gln236; these read DG, NE, and TAYNLS.

This sequence belongs to the NAD kinase family. It depends on a divalent metal cation as a cofactor.

It is found in the cytoplasm. The catalysed reaction is NAD(+) + ATP = ADP + NADP(+) + H(+). Involved in the regulation of the intracellular balance of NAD and NADP, and is a key enzyme in the biosynthesis of NADP. Catalyzes specifically the phosphorylation on 2'-hydroxyl of the adenosine moiety of NAD to yield NADP. This is NAD kinase from Helicobacter pylori (strain ATCC 700392 / 26695) (Campylobacter pylori).